Reading from the N-terminus, the 348-residue chain is Fructose-1,6-bisphosphatase class 1 (348 aa).

The Mg(2+) site is built by Glu104, Asp126, Leu128, and Asp129. Substrate is bound by residues 129 to 132, Asn221, Tyr249, and Lys279; that span reads DGSS. Mg(2+) is bound at residue Glu285.

Belongs to the FBPase class 1 family. As to quaternary structure, homotetramer. The cofactor is Mg(2+).

The protein resides in the cytoplasm. It carries out the reaction beta-D-fructose 1,6-bisphosphate + H2O = beta-D-fructose 6-phosphate + phosphate. The protein operates within carbohydrate biosynthesis; Calvin cycle. The sequence is that of Fructose-1,6-bisphosphatase class 1 from Thermosynechococcus vestitus (strain NIES-2133 / IAM M-273 / BP-1).